A 114-amino-acid chain; its full sequence is Replication initiation control protein YabA (114 aa).

Residues His-84, Cys-86, Cys-102, and Cys-105 each contribute to the Zn(2+) site.

The protein belongs to the YabA family. In terms of assembly, homotetramer. Interacts with both DnaA and DnaN, acting as a bridge between these two proteins. The cofactor is Zn(2+).

It is found in the cytoplasm. The protein resides in the nucleoid. In terms of biological role, involved in control of chromosome replication initiation. Inhibits the cooperative binding of DnaA to the oriC region, thus negatively regulating initiation of chromosome replication. Inhibits the ability of DnaA-ATP to form a helix on DNA; does not disassemble preformed DnaA-DNA helices. Decreases the residence time of DnaA on the chromosome at its binding sites (oriC, replication forks and promoter-binding sites). Tethers DnaA to the replication machinery via the DNA polymerase beta sliding clamp subunit (dnaN). Associates with oriC and other DnaA targets on the chromosome in a DnaA-dependent manner. This chain is Replication initiation control protein YabA, found in Ligilactobacillus salivarius (strain UCC118) (Lactobacillus salivarius).